The following is a 142-amino-acid chain: Large ribosomal subunit protein uL13 (142 aa).

The protein belongs to the universal ribosomal protein uL13 family. As to quaternary structure, part of the 50S ribosomal subunit.

Its function is as follows. This protein is one of the early assembly proteins of the 50S ribosomal subunit, although it is not seen to bind rRNA by itself. It is important during the early stages of 50S assembly. The chain is Large ribosomal subunit protein uL13 from Buchnera aphidicola subsp. Schizaphis graminum (strain Sg).